The chain runs to 546 residues: Membrane protein insertase YidC (546 aa).

The helical transmembrane segment at 6 to 26 (NLLLIALLFVSFMIWQAWQVD) threads the bilayer. The segment covering 30 to 44 (QPTAQTTQQTTNTAT) has biased composition (low complexity). The interval 30 to 55 (QPTAQTTQQTTNTATGDKASQAVPGS) is disordered. The next 4 membrane-spanning stretches (helical) occupy residues 344-364 (KFIHSFVGNWGFSIIVITFIV), 419-439 (LGGCLPLIIQMPIFLALYYML), 457-477 (LSAQDPYYILPILMGITMYFI), and 498-518 (PVIFTVFFLWFPAGLVLYYIV).

The protein belongs to the OXA1/ALB3/YidC family. Type 1 subfamily. Interacts with the Sec translocase complex via SecD. Specifically interacts with transmembrane segments of nascent integral membrane proteins during membrane integration.

The protein localises to the cell inner membrane. Its function is as follows. Required for the insertion and/or proper folding and/or complex formation of integral membrane proteins into the membrane. Involved in integration of membrane proteins that insert both dependently and independently of the Sec translocase complex, as well as at least some lipoproteins. Aids folding of multispanning membrane proteins. The sequence is that of Membrane protein insertase YidC from Yersinia pestis.